Here is a 209-residue protein sequence, read N- to C-terminus: ATP synthase subunit b 2 (209 aa).

Residues 9–29 form a helical membrane-spanning segment; the sequence is WWGWVTLSVLVMVAGDGTLAF.

It belongs to the ATPase B chain family. F-type ATPases have 2 components, F(1) - the catalytic core - and F(0) - the membrane proton channel. F(1) has five subunits: alpha(3), beta(3), gamma(1), delta(1), epsilon(1). F(0) has three main subunits: a(1), b(2) and c(10-14). The alpha and beta chains form an alternating ring which encloses part of the gamma chain. F(1) is attached to F(0) by a central stalk formed by the gamma and epsilon chains, while a peripheral stalk is formed by the delta and b chains.

It localises to the cell inner membrane. Its function is as follows. F(1)F(0) ATP synthase produces ATP from ADP in the presence of a proton or sodium gradient. F-type ATPases consist of two structural domains, F(1) containing the extramembraneous catalytic core and F(0) containing the membrane proton channel, linked together by a central stalk and a peripheral stalk. During catalysis, ATP synthesis in the catalytic domain of F(1) is coupled via a rotary mechanism of the central stalk subunits to proton translocation. Functionally, component of the F(0) channel, it forms part of the peripheral stalk, linking F(1) to F(0). The sequence is that of ATP synthase subunit b 2 from Desulfosudis oleivorans (strain DSM 6200 / JCM 39069 / Hxd3) (Desulfococcus oleovorans).